The sequence spans 318 residues: NADH-ubiquinone oxidoreductase chain 1 (318 aa).

Helical transmembrane passes span 2–22 (FLMN…FLTL), 37–57 (PNIV…KLFI), 69–89 (LMFT…WIPM), 100–120 (LGVL…LWSG), 136–156 (VAQT…TMMM), 171–191 (HMWL…STLA), 206–226 (ELVS…FFMA), 253–273 (ELFT…FLWI), and 294–314 (LPLT…SAGI).

Belongs to the complex I subunit 1 family.

The protein resides in the mitochondrion inner membrane. It carries out the reaction a ubiquinone + NADH + 5 H(+)(in) = a ubiquinol + NAD(+) + 4 H(+)(out). Core subunit of the mitochondrial membrane respiratory chain NADH dehydrogenase (Complex I) that is believed to belong to the minimal assembly required for catalysis. Complex I functions in the transfer of electrons from NADH to the respiratory chain. The immediate electron acceptor for the enzyme is believed to be ubiquinone. This Tolypeutes matacus (Southern three-banded armadillo) protein is NADH-ubiquinone oxidoreductase chain 1 (MT-ND1).